The sequence spans 350 residues: Small ribosomal subunit biogenesis GTPase RsgA (350 aa).

Positions 1 to 30 (MSKRKLTQNQQRRIQSNNAKTLHRHQHRHK) are disordered. Residues 7–20 (TQNQQRRIQSNNAK) are compositionally biased toward polar residues. A compositionally biased stretch (basic residues) spans 21 to 30 (TLHRHQHRHK). One can recognise a CP-type G domain in the interval 106 to 274 (HNQIVRPDYY…LIDSPGIREF (169 aa)). GTP-binding positions include 162–165 (NKAD) and 216–224 (GQSGVGKSS). Zn(2+)-binding residues include Cys298, Cys303, His305, and Cys311.

This sequence belongs to the TRAFAC class YlqF/YawG GTPase family. RsgA subfamily. Monomer. Associates with 30S ribosomal subunit, binds 16S rRNA. Zn(2+) is required as a cofactor.

The protein resides in the cytoplasm. Functionally, one of several proteins that assist in the late maturation steps of the functional core of the 30S ribosomal subunit. Helps release RbfA from mature subunits. May play a role in the assembly of ribosomal proteins into the subunit. Circularly permuted GTPase that catalyzes slow GTP hydrolysis, GTPase activity is stimulated by the 30S ribosomal subunit. The polypeptide is Small ribosomal subunit biogenesis GTPase RsgA (Histophilus somni (strain 2336) (Haemophilus somnus)).